Here is a 427-residue protein sequence, read N- to C-terminus: Glutamate-1-semialdehyde 2,1-aminomutase 1 (427 aa).

Position 267 is an N6-(pyridoxal phosphate)lysine (Lys-267).

It belongs to the class-III pyridoxal-phosphate-dependent aminotransferase family. HemL subfamily. In terms of assembly, homodimer. Requires pyridoxal 5'-phosphate as cofactor.

Its subcellular location is the cytoplasm. It catalyses the reaction (S)-4-amino-5-oxopentanoate = 5-aminolevulinate. It functions in the pathway porphyrin-containing compound metabolism; protoporphyrin-IX biosynthesis; 5-aminolevulinate from L-glutamyl-tRNA(Glu): step 2/2. This chain is Glutamate-1-semialdehyde 2,1-aminomutase 1, found in Macrococcus caseolyticus (strain JCSC5402) (Macrococcoides caseolyticum).